A 93-amino-acid polypeptide reads, in one-letter code: YcgL domain-containing protein Shal_1837 (93 aa).

Residues 1 to 85 (MICAVYKSRR…PVVNLLEQHK (85 aa)) form the YcgL domain.

In Shewanella halifaxensis (strain HAW-EB4), this protein is YcgL domain-containing protein Shal_1837.